The sequence spans 354 residues: Guanine nucleotide-binding protein alpha-3 subunit (354 aa).

Glycine 2 is lipidated: N-myristoyl glycine. Residue cysteine 4 is the site of S-palmitoyl cysteine attachment. In terms of domain architecture, G-alpha spans 33-354; it reads KECKILLLGS…TNALKDSGIL (322 aa). A G1 motif region spans residues 36–49; it reads KILLLGSGESGKST. GTP-binding positions include 41-48, 177-183, 202-206, 271-274, and alanine 326; these read GSGESGKS, LRARSKT, DVGGQ, and NKID. Mg(2+)-binding residues include serine 48 and threonine 183. Residues 175–183 form a G2 motif region; that stretch reads DVLRARSKT. The interval 198 to 207 is G3 motif; sequence IHLFDVGGQR. The tract at residues 267–274 is G4 motif; the sequence is ILFLNKID. The G5 motif stretch occupies residues 324–329; that stretch reads TQATDT.

It belongs to the G-alpha family. G proteins are composed of 3 units; alpha, beta and gamma. The alpha chain contains the guanine nucleotide binding site.

Its function is as follows. Guanine nucleotide-binding proteins (G proteins) are involved as modulators or transducers in various transmembrane signaling systems. GPA3 plays an active role in transmission of the pheromone signal. In Mycosarcoma maydis (Corn smut fungus), this protein is Guanine nucleotide-binding protein alpha-3 subunit (GPA3).